We begin with the raw amino-acid sequence, 118 residues long: Large ribosomal subunit protein uL18 (118 aa).

Belongs to the universal ribosomal protein uL18 family. As to quaternary structure, part of the 50S ribosomal subunit; part of the 5S rRNA/L5/L18/L25 subcomplex. Contacts the 5S and 23S rRNAs.

Its function is as follows. This is one of the proteins that bind and probably mediate the attachment of the 5S RNA into the large ribosomal subunit, where it forms part of the central protuberance. The polypeptide is Large ribosomal subunit protein uL18 (Cupriavidus pinatubonensis (strain JMP 134 / LMG 1197) (Cupriavidus necator (strain JMP 134))).